Reading from the N-terminus, the 344-residue chain is UDP-galactose/UDP-glucose transporter 5B (344 aa).

The next 8 membrane-spanning stretches (helical) occupy residues leucine 16–leucine 36, leucine 56–alanine 76, valine 115–methionine 135, phenylalanine 142–alanine 162, threonine 176–phenylalanine 196, cysteine 220–valine 240, cysteine 246–tyrosine 266, and cysteine 292–glycine 312. The tract at residues lysine 324–serine 344 is disordered.

It belongs to the nucleotide-sugar transporter family. UDP-galactose:UMP antiporter (TC 2.A.7.11) subfamily.

The protein localises to the membrane. In terms of biological role, sugar transporter involved in the transport of nucleotide-sugars from cytoplasm into the Golgi and/or the endoplasmic reticulum. In Arabidopsis thaliana (Mouse-ear cress), this protein is UDP-galactose/UDP-glucose transporter 5B.